Consider the following 125-residue polypeptide: Ribonuclease P protein component (125 aa).

Belongs to the RnpA family. In terms of assembly, consists of a catalytic RNA component (M1 or rnpB) and a protein subunit.

It carries out the reaction Endonucleolytic cleavage of RNA, removing 5'-extranucleotides from tRNA precursor.. In terms of biological role, RNaseP catalyzes the removal of the 5'-leader sequence from pre-tRNA to produce the mature 5'-terminus. It can also cleave other RNA substrates such as 4.5S RNA. The protein component plays an auxiliary but essential role in vivo by binding to the 5'-leader sequence and broadening the substrate specificity of the ribozyme. In Ruegeria pomeroyi (strain ATCC 700808 / DSM 15171 / DSS-3) (Silicibacter pomeroyi), this protein is Ribonuclease P protein component.